The primary structure comprises 218 residues: 7-cyano-7-deazaguanine synthase 1 (218 aa).

ATP is bound at residue 9–19 (YSGGMDSFTVL). Positions 185, 193, 196, and 199 each coordinate Zn(2+).

This sequence belongs to the QueC family. Requires Zn(2+) as cofactor.

It catalyses the reaction 7-carboxy-7-deazaguanine + NH4(+) + ATP = 7-cyano-7-deazaguanine + ADP + phosphate + H2O + H(+). Its pathway is purine metabolism; 7-cyano-7-deazaguanine biosynthesis. Catalyzes the ATP-dependent conversion of 7-carboxy-7-deazaguanine (CDG) to 7-cyano-7-deazaguanine (preQ(0)). The chain is 7-cyano-7-deazaguanine synthase 1 from Colwellia psychrerythraea (strain 34H / ATCC BAA-681) (Vibrio psychroerythus).